Consider the following 548-residue polypeptide: Membrane protein insertase YidC (548 aa).

A helical transmembrane segment spans residues 6–26 (NLLVIALLFVSFMIWQAWEQD). Residues 28-54 (NPQPQTQQTTQTTTTAAGSAADQGVPA) are disordered. A compositionally biased stretch (low complexity) spans 29-42 (PQPQTQQTTQTTTT). 4 helical membrane passes run 350 to 370 (FVGNWGFSIIIITFIVRGIMY), 424 to 444 (FPLIIQMPIFLALYYMLMGSI), 458 to 478 (LSAQDPYYILPILMGVTMFFI), and 499 to 519 (PVIFTVFFLWFPSGLVLYYIV).

This sequence belongs to the OXA1/ALB3/YidC family. Type 1 subfamily. As to quaternary structure, interacts with the Sec translocase complex via SecD. Specifically interacts with transmembrane segments of nascent integral membrane proteins during membrane integration.

It localises to the cell inner membrane. Required for the insertion and/or proper folding and/or complex formation of integral membrane proteins into the membrane. Involved in integration of membrane proteins that insert both dependently and independently of the Sec translocase complex, as well as at least some lipoproteins. Aids folding of multispanning membrane proteins. This chain is Membrane protein insertase YidC, found in Salmonella arizonae (strain ATCC BAA-731 / CDC346-86 / RSK2980).